A 248-amino-acid polypeptide reads, in one-letter code: tRNA (guanine-N(1)-)-methyltransferase (248 aa).

S-adenosyl-L-methionine-binding positions include Gly-113 and 133–138 (IGDYVL).

The protein belongs to the RNA methyltransferase TrmD family. As to quaternary structure, homodimer.

The protein resides in the cytoplasm. The catalysed reaction is guanosine(37) in tRNA + S-adenosyl-L-methionine = N(1)-methylguanosine(37) in tRNA + S-adenosyl-L-homocysteine + H(+). Functionally, specifically methylates guanosine-37 in various tRNAs. In Shewanella frigidimarina (strain NCIMB 400), this protein is tRNA (guanine-N(1)-)-methyltransferase.